A 229-amino-acid polypeptide reads, in one-letter code: Flagellar L-ring protein (229 aa).

The signal sequence occupies residues 1–25 (MKQVRLLPSAPVRAVCALAVAALAG). C26 is lipidated: N-palmitoyl cysteine. C26 carries the S-diacylglycerol cysteine lipid modification.

Belongs to the FlgH family. As to quaternary structure, the basal body constitutes a major portion of the flagellar organelle and consists of four rings (L,P,S, and M) mounted on a central rod.

The protein localises to the cell outer membrane. It is found in the bacterial flagellum basal body. Assembles around the rod to form the L-ring and probably protects the motor/basal body from shearing forces during rotation. This Burkholderia ambifaria (strain MC40-6) protein is Flagellar L-ring protein.